The sequence spans 310 residues: Ferredoxin--NADP reductase (310 aa).

Residues D26, Q34, Y39, V78, F108, D268, and T308 each coordinate FAD.

Belongs to the ferredoxin--NADP reductase type 2 family. In terms of assembly, homodimer. FAD is required as a cofactor.

It catalyses the reaction 2 reduced [2Fe-2S]-[ferredoxin] + NADP(+) + H(+) = 2 oxidized [2Fe-2S]-[ferredoxin] + NADPH. The protein is Ferredoxin--NADP reductase of Lactobacillus helveticus (strain DPC 4571).